The chain runs to 510 residues: uncharacterized protein (510 aa).

The Lumenal portion of the chain corresponds to 1–89 (MTSSLDDIEP…QGQRKKVLLK (89 aa)). A disordered region spans residues 38–76 (AVSQGVPDMDGQTTDSSKDPEPNSEDKKAFPPSSGSFFS). The segment covering 53–66 (SSKDPEPNSEDKKA) has biased composition (basic and acidic residues). A compositionally biased stretch (low complexity) spans 67–76 (FPPSSGSFFS). Residues 90-110 (FVFTNCLLAIICFTMFVLFWG) traverse the membrane as a helical segment. Topologically, residues 111-123 (ALYDTSKYLHKVK) are cytoplasmic. The chain crosses the membrane as a helical span at residues 124-144 (LLVVIQEPPVVILDNNSSMVV). Residues 145–312 (PSISYALPTF…TDRILLAPTQ (168 aa)) lie on the Lumenal side of the membrane. Residues 313 to 333 (IGVVYCLLLTFFQFLLYGPLH) traverse the membrane as a helical segment. Topologically, residues 334–349 (VEMAKVLRPANGLIYR) are cytoplasmic. The helical transmembrane segment at 350 to 370 (IAMSWFTFFFASLFFCTTTAI) threads the bilayer. Over 371 to 381 (FQVDFTKSFGR) the chain is Lumenal. Residues 382 to 402 (GGFVVYWMSTWLFMLAAGGAN) form a helical membrane-spanning segment. Residues 403–416 (ENAVMLVITLGPQY) lie on the Cytoplasmic side of the membrane. The chain crosses the membrane as a helical span at residues 417–437 (LGFWILSFVILNIAPSFFPLA). Residues 438–474 (LNNNVYRYGYMMPVHNVIDIYRVIFFDVTRRKMGRNY) are Lumenal-facing. Residues 475–495 (GILVALIALNTALLPFVGKYA) traverse the membrane as a helical segment. Residues 496–510 (SRKLKQKALVAAKQS) lie on the Cytoplasmic side of the membrane.

To yeast SNG1.

It localises to the endoplasmic reticulum membrane. This is an uncharacterized protein from Saccharomyces cerevisiae (strain ATCC 204508 / S288c) (Baker's yeast).